A 270-amino-acid chain; its full sequence is Ribosomal RNA small subunit methyltransferase A (270 aa).

Positions 15, 17, 42, 64, 89, and 108 each coordinate S-adenosyl-L-methionine.

The protein belongs to the class I-like SAM-binding methyltransferase superfamily. rRNA adenine N(6)-methyltransferase family. RsmA subfamily.

The protein localises to the cytoplasm. It carries out the reaction adenosine(1518)/adenosine(1519) in 16S rRNA + 4 S-adenosyl-L-methionine = N(6)-dimethyladenosine(1518)/N(6)-dimethyladenosine(1519) in 16S rRNA + 4 S-adenosyl-L-homocysteine + 4 H(+). In terms of biological role, specifically dimethylates two adjacent adenosines (A1518 and A1519) in the loop of a conserved hairpin near the 3'-end of 16S rRNA in the 30S particle. May play a critical role in biogenesis of 30S subunits. This Anaplasma marginale (strain Florida) protein is Ribosomal RNA small subunit methyltransferase A.